The primary structure comprises 241 residues: Acetoacetyl-CoA reductase (241 aa).

NADP(+)-binding positions include 12–14 (RGI), R39, and 82–86 (NAGIT). Residues D88 and 141-144 (QMGQ) contribute to the substrate site. Y147 functions as the Proton acceptor in the catalytic mechanism. Residue 177–180 (PGYI) coordinates NADP(+). 178 to 179 (GY) contributes to the substrate binding site.

This sequence belongs to the short-chain dehydrogenases/reductases (SDR) family.

Its subcellular location is the cytoplasm. It carries out the reaction a (3R)-3-hydroxyacyl-CoA + NADP(+) = a 3-oxoacyl-CoA + NADPH + H(+). Its pathway is biopolymer metabolism; poly-(R)-3-hydroxybutanoate biosynthesis. In Rhizobium meliloti (strain 1021) (Ensifer meliloti), this protein is Acetoacetyl-CoA reductase.